Consider the following 956-residue polypeptide: Valine--tRNA ligase (956 aa).

The 'HIGH' region motif lies at 43–53 (PNITGNLHIGH). Residues 556–560 (KMSKS) carry the 'KMSKS' region motif. Lys-559 contacts ATP. Residues 889-920 (PKEKELKNLNKEISKIQLAINKLQQRLSNEEF) are a coiled coil.

It belongs to the class-I aminoacyl-tRNA synthetase family. ValS type 1 subfamily. Monomer.

It localises to the cytoplasm. It carries out the reaction tRNA(Val) + L-valine + ATP = L-valyl-tRNA(Val) + AMP + diphosphate. In terms of biological role, catalyzes the attachment of valine to tRNA(Val). As ValRS can inadvertently accommodate and process structurally similar amino acids such as threonine, to avoid such errors, it has a 'posttransfer' editing activity that hydrolyzes mischarged Thr-tRNA(Val) in a tRNA-dependent manner. This is Valine--tRNA ligase from Buchnera aphidicola subsp. Baizongia pistaciae (strain Bp).